A 496-amino-acid polypeptide reads, in one-letter code: L-arabinose isomerase (496 aa).

Positions 306, 331, 348, and 447 each coordinate Mn(2+).

It belongs to the arabinose isomerase family. It depends on Mn(2+) as a cofactor.

The enzyme catalyses beta-L-arabinopyranose = L-ribulose. It functions in the pathway carbohydrate degradation; L-arabinose degradation via L-ribulose; D-xylulose 5-phosphate from L-arabinose (bacterial route): step 1/3. Its function is as follows. Catalyzes the conversion of L-arabinose to L-ribulose. This is L-arabinose isomerase from Geobacillus thermodenitrificans (strain NG80-2).